Reading from the N-terminus, the 126-residue chain is Holo-[acyl-carrier-protein] synthase (126 aa).

Positions 9 and 57 each coordinate Mg(2+).

This sequence belongs to the P-Pant transferase superfamily. AcpS family. Requires Mg(2+) as cofactor.

The protein localises to the cytoplasm. It catalyses the reaction apo-[ACP] + CoA = holo-[ACP] + adenosine 3',5'-bisphosphate + H(+). Transfers the 4'-phosphopantetheine moiety from coenzyme A to a Ser of acyl-carrier-protein. This is Holo-[acyl-carrier-protein] synthase from Alteromonas mediterranea (strain DSM 17117 / CIP 110805 / LMG 28347 / Deep ecotype).